Reading from the N-terminus, the 374-residue chain is o-succinylbenzoate synthase (374 aa).

Lys-164 (proton donor) is an active-site residue. Positions 189, 214, and 239 each coordinate Mg(2+). The active-site Proton acceptor is the Lys-263.

Belongs to the mandelate racemase/muconate lactonizing enzyme family. MenC type 2 subfamily. As to quaternary structure, homodimer. Requires a divalent metal cation as cofactor.

The enzyme catalyses (1R,6R)-6-hydroxy-2-succinyl-cyclohexa-2,4-diene-1-carboxylate = 2-succinylbenzoate + H2O. The protein operates within quinol/quinone metabolism; 1,4-dihydroxy-2-naphthoate biosynthesis; 1,4-dihydroxy-2-naphthoate from chorismate: step 4/7. It functions in the pathway quinol/quinone metabolism; menaquinone biosynthesis. Functionally, converts 2-succinyl-6-hydroxy-2,4-cyclohexadiene-1-carboxylate (SHCHC) to 2-succinylbenzoate (OSB). Also acts as a N-succinylamino acid racemase (NSAR) that catalyzes the racemization of N-succinyl-L-phenylglycine. L.innocua has the menaquinone synthesis pathway, indicating that the species requires OSBS activity. However, the NSAR/OSBS is not encoded in the menaquinone operon, raising the possibility that both NSAR and OSBS are biological functions. The chain is o-succinylbenzoate synthase from Listeria innocua serovar 6a (strain ATCC BAA-680 / CLIP 11262).